The sequence spans 340 residues: DNA repair protein RAD51 homolog A (340 aa).

Positions methionine 1 to alanine 14 are enriched in low complexity. The tract at residues methionine 1–histidine 21 is disordered. Residues threonine 49–alanine 78 form the HhH domain. Residue glycine 128–threonine 135 coordinates ATP.

The protein belongs to the RecA family. RAD51 subfamily. In terms of assembly, self-associates and may interact with XRCC3 homolog. In terms of tissue distribution, highly expressed in mitotic and meiotic tissues, but low levels in differentiated tissues.

It localises to the nucleus. Binds to single and double-stranded DNA and exhibits DNA-dependent ATPase activity. Unwinds duplex DNA. Component of the meiotic recombination pathway. Seems to play a role in mediating chromosome homology search, chromosome pairing and synapsis at early stages and probably chromosome crossing-over at later stages in meiosis. Probably is involved in the repair of meiotic double strand breaks (DBSs) and in homologous recombination. The chain is DNA repair protein RAD51 homolog A (RAD51A) from Zea mays (Maize).